Here is a 49-residue protein sequence, read N- to C-terminus: Unknown protein from spot 75 of 2D-PAGE of etiolated coleoptile (49 aa).

This Zea mays (Maize) protein is Unknown protein from spot 75 of 2D-PAGE of etiolated coleoptile.